The primary structure comprises 158 residues: MQGTLSVWLAKRGLIHRSLGFDYQGIETLQIKPEDWHSIAVILYVYGYNYLRSQCAYDVAPGGLLASVYHLTRIEYGVNQAEEVCIKVFMHRSNPRIPSVFWVWKSTDFQERESYDMLGITYDSHPRLKRILMPESWIGWPLRKDYIAPNFYEIQDAY.

Belongs to the complex I 30 kDa subunit family. NDH is composed of at least 16 different subunits, 5 of which are encoded in the nucleus.

It localises to the plastid. Its subcellular location is the chloroplast thylakoid membrane. It carries out the reaction a plastoquinone + NADH + (n+1) H(+)(in) = a plastoquinol + NAD(+) + n H(+)(out). The catalysed reaction is a plastoquinone + NADPH + (n+1) H(+)(in) = a plastoquinol + NADP(+) + n H(+)(out). Functionally, NDH shuttles electrons from NAD(P)H:plastoquinone, via FMN and iron-sulfur (Fe-S) centers, to quinones in the photosynthetic chain and possibly in a chloroplast respiratory chain. The immediate electron acceptor for the enzyme in this species is believed to be plastoquinone. Couples the redox reaction to proton translocation, and thus conserves the redox energy in a proton gradient. This Arabis hirsuta (Hairy rock-cress) protein is NAD(P)H-quinone oxidoreductase subunit J, chloroplastic.